Consider the following 119-residue polypeptide: Ribonuclease P protein component (119 aa).

This sequence belongs to the RnpA family. In terms of assembly, consists of a catalytic RNA component (M1 or rnpB) and a protein subunit.

It catalyses the reaction Endonucleolytic cleavage of RNA, removing 5'-extranucleotides from tRNA precursor.. RNaseP catalyzes the removal of the 5'-leader sequence from pre-tRNA to produce the mature 5'-terminus. It can also cleave other RNA substrates such as 4.5S RNA. The protein component plays an auxiliary but essential role in vivo by binding to the 5'-leader sequence and broadening the substrate specificity of the ribozyme. This chain is Ribonuclease P protein component, found in Mycobacterium avium (strain 104).